The primary structure comprises 224 residues: Large ribosomal subunit protein uL3 (224 aa).

At Gln-158 the chain carries N5-methylglutamine.

It belongs to the universal ribosomal protein uL3 family. Part of the 50S ribosomal subunit. Forms a cluster with proteins L14 and L19. In terms of processing, methylated by PrmB.

Functionally, one of the primary rRNA binding proteins, it binds directly near the 3'-end of the 23S rRNA, where it nucleates assembly of the 50S subunit. The sequence is that of Large ribosomal subunit protein uL3 from Paracidovorax citrulli (strain AAC00-1) (Acidovorax citrulli).